Here is a 97-residue protein sequence, read N- to C-terminus: uncharacterized protein (97 aa).

This is an uncharacterized protein from Methanothermococcus thermolithotrophicus (Methanococcus thermolithotrophicus).